A 144-amino-acid chain; its full sequence is Large ribosomal subunit protein uL15 (144 aa).

A disordered region spans residues 1–44 (MNLNELQPAAGSRHVRNRVGRGTSSGNGKTSGRGQKGQKARGKV). The span at 23–35 (TSSGNGKTSGRGQ) shows a compositional bias: gly residues.

This sequence belongs to the universal ribosomal protein uL15 family. Part of the 50S ribosomal subunit.

Binds to the 23S rRNA. The protein is Large ribosomal subunit protein uL15 of Leuconostoc mesenteroides subsp. mesenteroides (strain ATCC 8293 / DSM 20343 / BCRC 11652 / CCM 1803 / JCM 6124 / NCDO 523 / NBRC 100496 / NCIMB 8023 / NCTC 12954 / NRRL B-1118 / 37Y).